The primary structure comprises 156 residues: Large ribosomal subunit protein uL13 (156 aa).

It belongs to the universal ribosomal protein uL13 family. As to quaternary structure, part of the 50S ribosomal subunit.

Functionally, this protein is one of the early assembly proteins of the 50S ribosomal subunit, although it is not seen to bind rRNA by itself. It is important during the early stages of 50S assembly. This Archaeoglobus fulgidus (strain ATCC 49558 / DSM 4304 / JCM 9628 / NBRC 100126 / VC-16) protein is Large ribosomal subunit protein uL13.